The following is a 120-amino-acid chain: FK506-binding protein 1B (120 aa).

The segment at 1-24 (MNPPQGVTKTILRPGNGRDSPHTG) is disordered. Positions 24 to 120 (GDTVIIDYTG…LVLYVCSPAG (97 aa)) constitute a PPIase FKBP-type domain.

The protein belongs to the FKBP-type PPIase family. FKBP1 subfamily.

The catalysed reaction is [protein]-peptidylproline (omega=180) = [protein]-peptidylproline (omega=0). PPIases accelerate the folding of proteins. It catalyzes the cis-trans isomerization of proline imidic peptide bonds in oligopeptides. In Emericella nidulans (strain FGSC A4 / ATCC 38163 / CBS 112.46 / NRRL 194 / M139) (Aspergillus nidulans), this protein is FK506-binding protein 1B (FKBP3).